The sequence spans 145 residues: Deoxyuridine 5'-triphosphate nucleotidohydrolase (145 aa).

Substrate contacts are provided by residues 65–67 (RSG), asparagine 78, 82–84 (TID), and lysine 92.

It belongs to the dUTPase family. Mg(2+) serves as cofactor.

It carries out the reaction dUTP + H2O = dUMP + diphosphate + H(+). The protein operates within pyrimidine metabolism; dUMP biosynthesis; dUMP from dCTP (dUTP route): step 2/2. Its function is as follows. This enzyme is involved in nucleotide metabolism: it produces dUMP, the immediate precursor of thymidine nucleotides and it decreases the intracellular concentration of dUTP so that uracil cannot be incorporated into DNA. The sequence is that of Deoxyuridine 5'-triphosphate nucleotidohydrolase from Syntrophomonas wolfei subsp. wolfei (strain DSM 2245B / Goettingen).